The following is an 88-amino-acid chain: Antitoxin VapB21 (88 aa).

Its function is as follows. Antitoxin component of a type II toxin-antitoxin (TA) system. The protein is Antitoxin VapB21 (vapB21) of Mycobacterium tuberculosis (strain CDC 1551 / Oshkosh).